We begin with the raw amino-acid sequence, 262 residues long: Ribose-5-phosphate isomerase A (262 aa).

Substrate contacts are provided by residues 33–36 (TGST), 89–92 (DGAD), and 102–105 (KGGG). Residue Glu111 is the Proton acceptor of the active site. Lys129 lines the substrate pocket.

Belongs to the ribose 5-phosphate isomerase family. As to quaternary structure, homodimer.

It catalyses the reaction aldehydo-D-ribose 5-phosphate = D-ribulose 5-phosphate. The protein operates within carbohydrate degradation; pentose phosphate pathway; D-ribose 5-phosphate from D-ribulose 5-phosphate (non-oxidative stage): step 1/1. Its function is as follows. Catalyzes the reversible conversion of ribose-5-phosphate to ribulose 5-phosphate. The sequence is that of Ribose-5-phosphate isomerase A from Ruegeria pomeroyi (strain ATCC 700808 / DSM 15171 / DSS-3) (Silicibacter pomeroyi).